The primary structure comprises 173 residues: Enhancer of split mdelta protein (173 aa).

A bHLH domain is found at 15-72 (YRKVTKPLLERKRRARMNLYLDELKDLIVDTMDAQGEQVSKLEKADILELTVNYLKAQ). One can recognise an Orange domain in the interval 93–126 (FRAGYTQAAYEVSHIFSTVPGLDLKFGTHLMKQL). The interval 147–173 (VNLADQKRSKSPREEDIHHGEEVWRPW) is disordered. Positions 151–173 (DQKRSKSPREEDIHHGEEVWRPW) are enriched in basic and acidic residues. Positions 170–173 (WRPW) match the WRPW motif motif.

As to quaternary structure, transcription repression requires formation of a complex with a corepressor protein (Groucho).

It localises to the nucleus. Its function is as follows. Transcriptional repressor of genes that require a bHLH protein for their transcription. May serve as a transcriptional regulator of the Achaete-scute complex (AS-C) genes. Contributes to the neural-epidermal lineage decision during early neurogenesis. As part of the Notch signaling pathway, required to maintain the self-renewal and identity of type II neuroblasts by regulating the expression of the transcriptional repressor erm. The sequence is that of Enhancer of split mdelta protein from Drosophila melanogaster (Fruit fly).